Reading from the N-terminus, the 783-residue chain is Spindle pole body protein ppc89 (783 aa).

The residue at position 157 (serine 157) is a Phosphoserine. Disordered regions lie at residues 180-216, 434-458, 471-504, and 528-610; these read FDSP…ETPS, KESN…MNEA, ENKS…PTSG, and LSQS…MKGN. Composition is skewed to polar residues over residues 201 to 216, 437 to 453, and 474 to 504; these read RSKT…ETPS, NVTS…SKPL, and SGAN…PTSG. Residues 536–551 are compositionally biased toward basic residues; sequence PVKHRKRRPKSKRRIT. Over residues 566 to 590 the composition is skewed to acidic residues; the sequence is ESDEGSEEISLDSEYSDILSDDGDF.

It is found in the cytoplasm. Its subcellular location is the cytoskeleton. It localises to the microtubule organizing center. The protein resides in the spindle pole body. Its function is as follows. Has a role in meiosis. This Schizosaccharomyces pombe (strain 972 / ATCC 24843) (Fission yeast) protein is Spindle pole body protein ppc89 (ppc89).